Here is a 220-residue protein sequence, read N- to C-terminus: UPF0643 protein PB2B2.08 (220 aa).

The protein belongs to the UPF0643 family.

Its subcellular location is the cytoplasm. It localises to the nucleus. This is UPF0643 protein PB2B2.08 from Schizosaccharomyces pombe (strain 972 / ATCC 24843) (Fission yeast).